The following is an 89-amino-acid chain: Small ribosomal subunit protein uS15 (89 aa).

The span at 1–21 (MSITTEEKARVMKEYGTKDGD) shows a compositional bias: basic and acidic residues. The disordered stretch occupies residues 1–24 (MSITTEEKARVMKEYGTKDGDTGS).

The protein belongs to the universal ribosomal protein uS15 family. Part of the 30S ribosomal subunit. Forms a bridge to the 50S subunit in the 70S ribosome, contacting the 23S rRNA.

One of the primary rRNA binding proteins, it binds directly to 16S rRNA where it helps nucleate assembly of the platform of the 30S subunit by binding and bridging several RNA helices of the 16S rRNA. Its function is as follows. Forms an intersubunit bridge (bridge B4) with the 23S rRNA of the 50S subunit in the ribosome. The polypeptide is Small ribosomal subunit protein uS15 (Ruegeria pomeroyi (strain ATCC 700808 / DSM 15171 / DSS-3) (Silicibacter pomeroyi)).